The chain runs to 806 residues: Glycerol-3-phosphate acyltransferase (806 aa).

The short motif at 305–310 (CHRSHM) is the HXXXXD motif element.

It belongs to the GPAT/DAPAT family.

Its subcellular location is the cell inner membrane. The catalysed reaction is sn-glycerol 3-phosphate + an acyl-CoA = a 1-acyl-sn-glycero-3-phosphate + CoA. Its pathway is phospholipid metabolism; CDP-diacylglycerol biosynthesis; CDP-diacylglycerol from sn-glycerol 3-phosphate: step 1/3. The sequence is that of Glycerol-3-phosphate acyltransferase from Salmonella arizonae (strain ATCC BAA-731 / CDC346-86 / RSK2980).